Consider the following 196-residue polypeptide: Putative NADH dehydrogenase/NAD(P)H nitroreductase SGR_2476 (196 aa).

Belongs to the nitroreductase family. HadB/RutE subfamily. The cofactor is FMN.

In Streptomyces griseus subsp. griseus (strain JCM 4626 / CBS 651.72 / NBRC 13350 / KCC S-0626 / ISP 5235), this protein is Putative NADH dehydrogenase/NAD(P)H nitroreductase SGR_2476.